Here is a 330-residue protein sequence, read N- to C-terminus: Mucin-15 (330 aa).

Positions methionine 1–glycine 23 are cleaved as a signal peptide. The tract at residues glycine 23 to phenylalanine 115 is disordered. The Extracellular portion of the chain corresponds to glutamate 24–threonine 232. 15 N-linked (GlcNAc...) asparagine glycosylation sites follow: asparagine 30, asparagine 44, asparagine 54, asparagine 71, asparagine 79, asparagine 89, asparagine 94, asparagine 122, asparagine 138, asparagine 147, asparagine 154, asparagine 162, asparagine 175, asparagine 214, and asparagine 221. Residues methionine 42–threonine 56 are compositionally biased toward polar residues. Polar residues predominate over residues phenylalanine 86–phenylalanine 115. Residues serine 164–glutamate 185 form a disordered region. Residues glycine 233–glycine 253 form a helical membrane-spanning segment. Residues tyrosine 254 to valine 330 are Cytoplasmic-facing. Residues leucine 279–valine 330 are disordered. Residues phenylalanine 292 to glycine 310 are compositionally biased toward polar residues.

Post-translationally, highly glycosylated (N- and O-linked carbohydrates). As to expression, mainly expressed on apical surfaces of the mammary epithelial cells.

The protein localises to the cell membrane. The protein resides in the secreted. In Bos taurus (Bovine), this protein is Mucin-15 (MUC15).